A 516-amino-acid chain; its full sequence is GMP synthase [glutamine-hydrolyzing] (516 aa).

A Glutamine amidotransferase type-1 domain is found at 8-198 (KILILDFGSQ…VVNICGCDTL (191 aa)). Cys-84 (nucleophile) is an active-site residue. Active-site residues include His-172 and Glu-174. One can recognise a GMPS ATP-PPase domain in the interval 199–391 (WNIENIIEND…LGLPYNMLYR (193 aa)). 226 to 232 (SGGVDSS) contributes to the ATP binding site.

As to quaternary structure, homodimer.

It carries out the reaction XMP + L-glutamine + ATP + H2O = GMP + L-glutamate + AMP + diphosphate + 2 H(+). It participates in purine metabolism; GMP biosynthesis; GMP from XMP (L-Gln route): step 1/1. Catalyzes the synthesis of GMP from XMP. In Francisella tularensis subsp. mediasiatica (strain FSC147), this protein is GMP synthase [glutamine-hydrolyzing].